A 320-amino-acid chain; its full sequence is Endolytic peptidoglycan transglycosylase RlpA (320 aa).

Belongs to the RlpA family.

Its function is as follows. Lytic transglycosylase with a strong preference for naked glycan strands that lack stem peptides. The polypeptide is Endolytic peptidoglycan transglycosylase RlpA (Rickettsia typhi (strain ATCC VR-144 / Wilmington)).